We begin with the raw amino-acid sequence, 127 residues long: MPSCDPGPAPACLPTKTFRSYLPRCHRTYSCVHCRAHLAKHDELISKSFQGSHGRAYLFNSVVNVGCGPAEQRLLLTGLHSVADIFCESCKTTLGWKYEQAFETSQKYKEGKYIIEMSHMVKDNGWD.

The Yippee domain maps to 27–124 (RTYSCVHCRA…IEMSHMVKDN (98 aa)). Zn(2+) contacts are provided by cysteine 31, cysteine 34, cysteine 87, and cysteine 90. Threonine 92 and threonine 93 each carry phosphothreonine. At tyrosine 98 the chain carries Phosphotyrosine.

This sequence belongs to the yippee family. In terms of tissue distribution, detected in brain, spleen and testis.

The protein resides in the nucleus. The protein localises to the nucleolus. The chain is Protein yippee-like 4 (Ypel4) from Mus musculus (Mouse).